The primary structure comprises 197 residues: Isopentenyl-diphosphate Delta-isomerase (197 aa).

The Mn(2+) site is built by histidine 41 and histidine 48. One can recognise a Nudix hydrolase domain in the interval 46-183 (QLHRAFSVFL…SWFMTVLDAA (138 aa)). Residue cysteine 83 is part of the active site. Cysteine 83 is a binding site for Mg(2+). Position 85 (histidine 85) interacts with Mn(2+). A Mg(2+)-binding site is contributed by glutamate 103. The Mn(2+) site is built by glutamate 130 and glutamate 132. Glutamate 132 is an active-site residue.

Belongs to the IPP isomerase type 1 family. The cofactor is Mg(2+). It depends on Mn(2+) as a cofactor.

It localises to the cytoplasm. The enzyme catalyses isopentenyl diphosphate = dimethylallyl diphosphate. Its pathway is isoprenoid biosynthesis; dimethylallyl diphosphate biosynthesis; dimethylallyl diphosphate from isopentenyl diphosphate: step 1/1. Its function is as follows. Catalyzes the 1,3-allylic rearrangement of the homoallylic substrate isopentenyl (IPP) to its highly electrophilic allylic isomer, dimethylallyl diphosphate (DMAPP). This Streptomyces avermitilis (strain ATCC 31267 / DSM 46492 / JCM 5070 / NBRC 14893 / NCIMB 12804 / NRRL 8165 / MA-4680) protein is Isopentenyl-diphosphate Delta-isomerase.